The following is a 317-amino-acid chain: Transcription factor elt-3 (317 aa).

Positions 1-34 (METANYYLPSPPYSSTSSSDSRESRMNTPIPTTY) are disordered. A GATA-type zinc finger spans residues 244–268 (CSNCKTRETTLWRRNGEGGVECNAC). Positions 290–317 (KRNRRPRNESPNSAIRNTHQRHGHAAAC) are disordered. The span at 307–317 (THQRHGHAAAC) shows a compositional bias: basic residues.

As to quaternary structure, interacts with skn-1; interaction may enhance transcriptional activation of target genes. In terms of tissue distribution, expressed in head, trunk and tail. Expression decreases with age in the hypodermal cells and the pharyngeal-intestinal valve cells in the head, eventually showing little or no expression in about 14 day old worms. Expressed in hypodermal, but not in intestinal, cells at 1 day of age. Expression in the hypodermal and intestinal cells in the trunk region decreases quickly between day 3 and day 5 of adulthood. Expression in the tail between days 3 and 14 stays approximately uniform.

The protein resides in the nucleus. In terms of biological role, transcription factor. Required, in concert with signal transducer and transcription factor sta-2, for up-regulation of the vacuolar H(+)-ATPase and acceleration of lysosome maturation at molt. Involved in regulating hypodermal development, perhaps acting downstream of transcription factor elt-1. Modulates environmentally induced changes in collagen gene expression, including rol-6, sqt-1, lon-3, and dpy-13. Involved in regulating expression of various genes, including gst-4, sod-3, ugt-9, and col-144. In response to oxidative stress, required to up-regulate expression of gst-4 mRNA. Regulated by the Insulin/IGF-1-like signaling (IIS) mediated pathway. Plays a role in longevity. May regulate the expression of genes that control sensitivity to osmotic stress, in conjunction with the GATA region-binding transcription factor elt-2. May form a transcriptional circuit with GATA factors egl-18 and elt-6. This Caenorhabditis elegans protein is Transcription factor elt-3.